The chain runs to 484 residues: Glutamate--tRNA ligase (484 aa).

The 'HIGH' region motif lies at 11–21 (PSPTGLLHIGN). The 'KMSKS' region signature appears at 255–259 (KLSKR). Lys-258 provides a ligand contact to ATP.

The protein belongs to the class-I aminoacyl-tRNA synthetase family. Glutamate--tRNA ligase type 1 subfamily. In terms of assembly, monomer.

Its subcellular location is the cytoplasm. The enzyme catalyses tRNA(Glu) + L-glutamate + ATP = L-glutamyl-tRNA(Glu) + AMP + diphosphate. In terms of biological role, catalyzes the attachment of glutamate to tRNA(Glu) in a two-step reaction: glutamate is first activated by ATP to form Glu-AMP and then transferred to the acceptor end of tRNA(Glu). The chain is Glutamate--tRNA ligase from Streptococcus suis (strain 98HAH33).